The primary structure comprises 181 residues: Large ribosomal subunit protein uL6 (181 aa).

It belongs to the universal ribosomal protein uL6 family. As to quaternary structure, part of the 50S ribosomal subunit.

Its function is as follows. This protein binds to the 23S rRNA, and is important in its secondary structure. It is located near the subunit interface in the base of the L7/L12 stalk, and near the tRNA binding site of the peptidyltransferase center. This chain is Large ribosomal subunit protein uL6, found in Coprothermobacter proteolyticus (strain ATCC 35245 / DSM 5265 / OCM 4 / BT).